The sequence spans 177 residues: ATP-dependent protease subunit HslV (177 aa).

Residue threonine 6 is part of the active site. Na(+) is bound by residues serine 162, cysteine 165, and threonine 168.

Belongs to the peptidase T1B family. HslV subfamily. A double ring-shaped homohexamer of HslV is capped on each side by a ring-shaped HslU homohexamer. The assembly of the HslU/HslV complex is dependent on binding of ATP.

The protein resides in the cytoplasm. It carries out the reaction ATP-dependent cleavage of peptide bonds with broad specificity.. Allosterically activated by HslU binding. Functionally, protease subunit of a proteasome-like degradation complex believed to be a general protein degrading machinery. The protein is ATP-dependent protease subunit HslV of Desulforudis audaxviator (strain MP104C).